Reading from the N-terminus, the 163-residue chain is ATP synthase subunit b', chloroplastic (163 aa).

A helical transmembrane segment spans residues 26–46; that stretch reads ATLPLMAVQILLFMVILNAVF.

It belongs to the ATPase B chain family. As to quaternary structure, F-type ATPases have 2 components, F(1) - the catalytic core - and F(0) - the membrane proton channel. F(1) has five subunits: alpha(3), beta(3), gamma(1), delta(1), epsilon(1). F(0) has four main subunits: a(1), b(1), b'(1) and c(10-14). The alpha and beta chains form an alternating ring which encloses part of the gamma chain. F(1) is attached to F(0) by a central stalk formed by the gamma and epsilon chains, while a peripheral stalk is formed by the delta, b and b' chains.

It is found in the plastid. Its subcellular location is the chloroplast thylakoid membrane. F(1)F(0) ATP synthase produces ATP from ADP in the presence of a proton or sodium gradient. F-type ATPases consist of two structural domains, F(1) containing the extramembraneous catalytic core and F(0) containing the membrane proton channel, linked together by a central stalk and a peripheral stalk. During catalysis, ATP synthesis in the catalytic domain of F(1) is coupled via a rotary mechanism of the central stalk subunits to proton translocation. Its function is as follows. Component of the F(0) channel, it forms part of the peripheral stalk, linking F(1) to F(0). The b'-subunit is a diverged and duplicated form of b found in plants and photosynthetic bacteria. In Guillardia theta (Cryptophyte), this protein is ATP synthase subunit b', chloroplastic.